The following is a 35-amino-acid chain: Dolichyl-diphosphooligosaccharide--protein glycosyltransferase subunit 4B (35 aa).

The Lumenal portion of the chain corresponds to 1–8 (MFDDQDLG). Residues 9-29 (FFANFLGIFIFIMVIAYHFVV) form a helical membrane-spanning segment. Residues 30–35 (AEPKFE) lie on the Cytoplasmic side of the membrane.

It belongs to the OST4 family. In terms of assembly, component of the oligosaccharyltransferase (OST) complex.

The protein resides in the endoplasmic reticulum membrane. Subunit of the oligosaccharyl transferase (OST) complex that catalyzes the initial transfer of a defined glycan (Glc(3)Man(9)GlcNAc(2) in eukaryotes) from the lipid carrier dolichol-pyrophosphate to an asparagine residue within an Asn-X-Ser/Thr consensus motif in nascent polypeptide chains, the first step in protein N-glycosylation. N-glycosylation occurs cotranslationally and the complex associates with the Sec61 complex at the channel-forming translocon complex that mediates protein translocation across the endoplasmic reticulum (ER). All subunits are required for a maximal enzyme activity. In Arabidopsis thaliana (Mouse-ear cress), this protein is Dolichyl-diphosphooligosaccharide--protein glycosyltransferase subunit 4B (OST4B).